The following is a 138-amino-acid chain: Phospholipase A2 EC1 (138 aa).

An N-terminal signal peptide occupies residues 1 to 16; it reads MRTLWIVAVWLMSVEG. Intrachain disulfides connect C42/C131, C44/C60, C59/C111, C65/C138, C66/C104, C73/C97, and C91/C102. Residues Y43, G45, and G47 each coordinate Ca(2+). H63 is an active-site residue. D64 contributes to the Ca(2+) binding site. D105 is an active-site residue.

It belongs to the phospholipase A2 family. Group II subfamily. It depends on Ca(2+) as a cofactor.

Its subcellular location is the secreted. It carries out the reaction a 1,2-diacyl-sn-glycero-3-phosphocholine + H2O = a 1-acyl-sn-glycero-3-phosphocholine + a fatty acid + H(+). This is Phospholipase A2 EC1 from Echis coloratus (Carpet viper).